The following is a 154-amino-acid chain: Melatonin receptor type 1A (154 aa).

The Cytoplasmic portion of the chain corresponds to 1-19; sequence YCYICHSLKYDRWYSNRNS. The helical transmembrane segment at 20 to 40 threads the bilayer; sequence LCCVFLICVLTLVAIVPNLCM. Topologically, residues 41-62 are extracellular; sequence GTLQYDPRIYSCTFAQSVSSAY. Residues 63–83 traverse the membrane as a helical segment; it reads TIAVVVFHFLVPMVIVIFRYL. At 84 to 115 the chain is on the cytoplasmic side; sequence RIWVLVLQIRWRAKPENNPRLKPQDFRNFVTM. A helical transmembrane segment spans residues 116–136; the sequence is FVVFVLFAICWAPLNFIGLAV. The Extracellular portion of the chain corresponds to 137-149; it reads ASDPASMAPRIPE.

This sequence belongs to the G-protein coupled receptor 1 family.

It localises to the cell membrane. High affinity receptor for melatonin. Likely to mediate the reproductive and circadian actions of melatonin. The activity of this receptor is mediated by pertussis toxin sensitive G proteins that inhibit adenylate cyclase activity. The polypeptide is Melatonin receptor type 1A (MTNR1A) (Sus scrofa (Pig)).